The chain runs to 82 residues: Small ribosomal subunit protein bS18 (82 aa).

The tract at residues 1–21 (MKRNNSKKVRVEPTRRPKKNP) is disordered.

This sequence belongs to the bacterial ribosomal protein bS18 family. Part of the 30S ribosomal subunit. Forms a tight heterodimer with protein bS6.

Binds as a heterodimer with protein bS6 to the central domain of the 16S rRNA, where it helps stabilize the platform of the 30S subunit. This Corynebacterium kroppenstedtii (strain DSM 44385 / JCM 11950 / CIP 105744 / CCUG 35717) protein is Small ribosomal subunit protein bS18.